Reading from the N-terminus, the 245-residue chain is MIKLVLIRHGQSLWNLENRFTGWTDVDLSENGLSEAREAGAILKKNGYTFDVAYTSVLKRAIRTLWIVLHEMDLTWVPIHKSWKLNERHYGALQGLNKDETAQKYGEEQVHIWRRSVDVRPPALTEDDPRYEATDPRYKTLKKGEFPLTECLEDTEKRVLAYWHSEIAPTLKSGNKVIISSHGNTIRSLVKYLDNLSSDGVVSLNIPTSIPLVYELDENLRPIRHYYLSMDGEVPEGEIPKHISF.

Residues 8 to 15 (RHGQSLWN), 21 to 22 (TG), R60, 87 to 90 (ERHY), K98, 114 to 115 (RR), and 183 to 184 (GN) each bind substrate. H9 acts as the Tele-phosphohistidine intermediate in catalysis. The active-site Proton donor/acceptor is the E87.

Belongs to the phosphoglycerate mutase family. BPG-dependent PGAM subfamily.

It catalyses the reaction (2R)-2-phosphoglycerate = (2R)-3-phosphoglycerate. Its pathway is carbohydrate degradation; glycolysis; pyruvate from D-glyceraldehyde 3-phosphate: step 3/5. Catalyzes the interconversion of 2-phosphoglycerate and 3-phosphoglycerate. The chain is 2,3-bisphosphoglycerate-dependent phosphoglycerate mutase from Bacillus cereus (strain ATCC 14579 / DSM 31 / CCUG 7414 / JCM 2152 / NBRC 15305 / NCIMB 9373 / NCTC 2599 / NRRL B-3711).